We begin with the raw amino-acid sequence, 313 residues long: Homoserine O-succinyltransferase (313 aa).

Cys142 acts as the Acyl-thioester intermediate in catalysis. Lys163 and Ser192 together coordinate substrate. His235 (proton acceptor) is an active-site residue. Residue Glu237 is part of the active site. Residue Arg249 participates in substrate binding.

This sequence belongs to the MetA family.

It localises to the cytoplasm. The catalysed reaction is L-homoserine + succinyl-CoA = O-succinyl-L-homoserine + CoA. The protein operates within amino-acid biosynthesis; L-methionine biosynthesis via de novo pathway; O-succinyl-L-homoserine from L-homoserine: step 1/1. In terms of biological role, transfers a succinyl group from succinyl-CoA to L-homoserine, forming succinyl-L-homoserine. This is Homoserine O-succinyltransferase from Shewanella baltica (strain OS223).